We begin with the raw amino-acid sequence, 204 residues long: DNA-binding transcriptional activator EvgA (204 aa).

One can recognise a Response regulatory domain in the interval 2-117; the sequence is NAIIIDDHPL…NIIAAIEAAK (116 aa). 4-aspartylphosphate is present on Asp52. The HTH luxR-type domain occupies 137-202; that stretch reads DQQKLDSLSK…DLYTFAQRNK (66 aa). The segment at residues 161–180 is a DNA-binding region (H-T-H motif); the sequence is NNDIAEKMFISNKTVSTYKS.

Homodimer. Post-translationally, phosphorylated by EvgS.

The protein resides in the cytoplasm. In terms of biological role, member of the two-component regulatory system EvgS/EvgA. Regulates the expression of emrKY operon and yfdX. Also seems to control expression of at least one other multidrug efflux operon. The sequence is that of DNA-binding transcriptional activator EvgA (evgA) from Escherichia coli O157:H7.